The following is a 341-amino-acid chain: Very-long-chain 3-oxoacyl-CoA reductase (341 aa).

A helical transmembrane segment spans residues 22–42; it reads AIYGFLLAGVAAFAAPIVSTI. L67, D123, D131, N150, Y217, K221, I250, and T252 together coordinate NADP(+). Residue Y217 is the Proton donor of the active site. Residue K221 is the Lowers pKa of active site Tyr of the active site.

It belongs to the short-chain dehydrogenases/reductases (SDR) family.

Its subcellular location is the endoplasmic reticulum membrane. The enzyme catalyses a very-long-chain (3R)-3-hydroxyacyl-CoA + NADP(+) = a very-long-chain 3-oxoacyl-CoA + NADPH + H(+). Its pathway is lipid metabolism; fatty acid biosynthesis. In terms of biological role, component of the microsomal membrane bound fatty acid elongation system, which produces the 26-carbon very long-chain fatty acids (VLCFA) from palmitate. Catalyzes the reduction of the 3-ketoacyl-CoA intermediate that is formed in each cycle of fatty acid elongation. VLCFAs serve as precursors for ceramide and sphingolipids. This chain is Very-long-chain 3-oxoacyl-CoA reductase, found in Phaeosphaeria nodorum (strain SN15 / ATCC MYA-4574 / FGSC 10173) (Glume blotch fungus).